Reading from the N-terminus, the 538-residue chain is MTTFKEAVTFKDVAVVFTEEELGLLDPAQRKLYRDVMLENFRNLLSVGHQPFHQDTCHFLREEKFWMMGTATQREGNSGGKIQTELESVPEAGAHEEWSCQQIWEQIAKDLTRSQDSIINNSQFFENGDVPSQVEAGLPTIHTGQKPSQGGKCKQSISDVPIFDLPQQLYSEEKSYTCDECGKSICYISALHVHQRVHVGEKLFMCDVCGKEFSQSSHLQTHQRVHTGEKPFKCEQCGKGFSRRSALNVHRKLHTGEKPYICEACGKAFIHDSQLKEHKRIHTGEKPFKCDICGKTFYFRSRLKSHSMVHTGEKPFRCDTCDKSFHQRSALNRHCMVHTGEKPYRCEQCGKGFIGRLDFYKHQVVHTGEKPYNCKECGKSFRWSSCLLNHQRVHSGEKSFKCEECGKGFYTNSQLSSHQRSHSGEKPYKCEECGKGYVTKFNLDLHQRVHTGERPYNCKECGKNFSRASSILNHKRLHCQKKPFKCEDCGKRLVHRTYRKDQPRDYSGENPSKCEDCGRRYKRRLNLDILLSLFLNDT.

The KRAB domain maps to 8-78 (VTFKDVAVVF…GTATQREGNS (71 aa)). 11 C2H2-type zinc fingers span residues 176–198 (YTCD…QRVH), 204–226 (FMCD…QRVH), 232–254 (FKCE…RKLH), 260–282 (YICE…KRIH), 288–310 (FKCD…SMVH), 316–338 (FRCD…CMVH), 344–366 (YRCE…QVVH), 372–394 (YNCK…QRVH), 400–422 (FKCE…QRSH), 428–450 (YKCE…QRVH), and 456–478 (YNCK…KRLH). The C2H2-type 12; degenerate zinc finger occupies 484–506 (FKCEDCGKRLVHRTYRKDQPRDY).

This sequence belongs to the krueppel C2H2-type zinc-finger protein family.

The protein localises to the nucleus. In terms of biological role, may be involved in transcriptional regulation. The sequence is that of Zinc finger protein 155 (ZNF155) from Homo sapiens (Human).